A 148-amino-acid polypeptide reads, in one-letter code: Large ribosomal subunit protein bL9 (148 aa).

The protein belongs to the bacterial ribosomal protein bL9 family.

Binds to the 23S rRNA. The polypeptide is Large ribosomal subunit protein bL9 (Thermus thermophilus).